The following is a 338-amino-acid chain: Beta-ketoacyl-[acyl-carrier-protein] synthase III 2 (338 aa).

Residues cysteine 119 and histidine 255 contribute to the active site. Residues 256 to 260 (QANIR) form an ACP-binding region. Residue asparagine 285 is part of the active site.

The protein belongs to the thiolase-like superfamily. FabH family. Homodimer.

The protein resides in the cytoplasm. It carries out the reaction malonyl-[ACP] + acetyl-CoA + H(+) = 3-oxobutanoyl-[ACP] + CO2 + CoA. It functions in the pathway lipid metabolism; fatty acid biosynthesis. In terms of biological role, catalyzes the condensation reaction of fatty acid synthesis by the addition to an acyl acceptor of two carbons from malonyl-ACP. Catalyzes the first condensation reaction which initiates fatty acid synthesis and may therefore play a role in governing the total rate of fatty acid production. Possesses both acetoacetyl-ACP synthase and acetyl transacylase activities. Its substrate specificity determines the biosynthesis of branched-chain and/or straight-chain of fatty acids. This Deinococcus radiodurans (strain ATCC 13939 / DSM 20539 / JCM 16871 / CCUG 27074 / LMG 4051 / NBRC 15346 / NCIMB 9279 / VKM B-1422 / R1) protein is Beta-ketoacyl-[acyl-carrier-protein] synthase III 2.